The sequence spans 305 residues: tRNA dimethylallyltransferase (305 aa).

ATP is bound at residue 14–21 (GPTASGKT). 16-21 (TASGKT) serves as a coordination point for substrate. Interaction with substrate tRNA regions lie at residues 39 to 42 (DSAL), 163 to 167 (QRIIR), and 243 to 248 (RCVGYR).

The protein belongs to the IPP transferase family. In terms of assembly, monomer. The cofactor is Mg(2+).

It catalyses the reaction adenosine(37) in tRNA + dimethylallyl diphosphate = N(6)-dimethylallyladenosine(37) in tRNA + diphosphate. In terms of biological role, catalyzes the transfer of a dimethylallyl group onto the adenine at position 37 in tRNAs that read codons beginning with uridine, leading to the formation of N6-(dimethylallyl)adenosine (i(6)A). In Vesicomyosocius okutanii subsp. Calyptogena okutanii (strain HA), this protein is tRNA dimethylallyltransferase.